A 272-amino-acid polypeptide reads, in one-letter code: Phosphoglycolate phosphatase (272 aa).

Residue aspartate 19 is the Nucleophile of the active site. 3 residues coordinate Mg(2+): aspartate 19, aspartate 21, and aspartate 182.

This sequence belongs to the HAD-like hydrolase superfamily. CbbY/CbbZ/Gph/YieH family. Mg(2+) is required as a cofactor.

The enzyme catalyses 2-phosphoglycolate + H2O = glycolate + phosphate. Its pathway is organic acid metabolism; glycolate biosynthesis; glycolate from 2-phosphoglycolate: step 1/1. In terms of biological role, specifically catalyzes the dephosphorylation of 2-phosphoglycolate. Is involved in the dissimilation of the intracellular 2-phosphoglycolate formed during the DNA repair of 3'-phosphoglycolate ends, a major class of DNA lesions induced by oxidative stress. The protein is Phosphoglycolate phosphatase of Pseudomonas putida (strain ATCC 47054 / DSM 6125 / CFBP 8728 / NCIMB 11950 / KT2440).